Consider the following 680-residue polypeptide: Tumor protein 63 (680 aa).

Residues methionine 1–methionine 107 form a transcription activation region. A compositionally biased stretch (polar residues) spans glutamine 123–aspartate 157. The segment at glutamine 123–tyrosine 171 is disordered. A DNA-binding region spans residues aspartate 170–glutamine 362. Zn(2+) is bound by residues cysteine 244, histidine 247, cysteine 308, and cysteine 312. Positions aspartate 351 to arginine 360 are enriched in basic and acidic residues. Disordered stretches follow at residues aspartate 351 to arginine 393 and arginine 436 to methionine 472. The interval arginine 352–threonine 388 is interaction with HIPK2. Polar residues predominate over residues arginine 379–serine 389. Residues arginine 394 to histidine 443 form an oligomerization region. Positions glutamine 437–serine 463 are enriched in low complexity. Positions proline 541–leucine 607 constitute an SAM domain. Positions phenylalanine 610 to glutamate 680 are transactivation inhibition. Residue lysine 676 forms a Glycyl lysine isopeptide (Lys-Gly) (interchain with G-Cter in SUMO) linkage.

The protein belongs to the p53 family. As to quaternary structure, binds DNA as a homotetramer. Isoform composition of the tetramer may determine transactivation activity. Interacts with HIPK2. Interacts with SSRP1, leading to stimulate coactivator activity. Interacts with PDS5A. Interacts (via activation domain) with NOC2L. Interacts with WWP1. The cofactor is Zn(2+). May be sumoylated. Post-translationally, ubiquitinated. Polyubiquitination involves WWP1 and leads to proteasomal degradation of this protein. As to expression, widely expressed, notably in thymus, prostate, placenta and skeletal muscle, although the precise isoform varies according to tissue type. Progenitor cell layers of skin, breast and prostate express high levels of DeltaN-type isoforms.

It localises to the nucleus. Acts as a sequence specific DNA binding transcriptional activator or repressor. The isoforms contain a varying set of transactivation and auto-regulating transactivation inhibiting domains thus showing an isoform specific activity. May be required in conjunction with TP73/p73 for initiation of p53/TP53 dependent apoptosis in response to genotoxic insults and the presence of activated oncogenes. Involved in Notch signaling by probably inducing JAG1 and JAG2. Activates transcription of the p21 promoter. Activates RIPK4 transcription. Plays a role in the regulation of epithelial morphogenesis. The ratio of DeltaN-type and TA*-type isoforms may govern the maintenance of epithelial stem cell compartments and regulate the initiation of epithelial stratification from the undifferentiated embryonal ectoderm. Required for limb formation from the apical ectodermal ridge. This chain is Tumor protein 63 (Tp63), found in Mus musculus (Mouse).